The following is an 858-amino-acid chain: Elongation factor 2 (858 aa).

Residues 17–362 enclose the tr-type G domain; it reads ANIRNMSVIA…MITIHLPSPV (346 aa). 26-33 provides a ligand contact to GTP; that stretch reads AHVDHGKS. The residue at position 54 (threonine 54) is a Phosphothreonine. The residue at position 57 (threonine 57) is a Phosphothreonine; by EEF2K. Threonine 59 carries the phosphothreonine modification. Lysine 152 carries the post-translational modification N6-succinyllysine. Residues 158 to 161 and 216 to 218 contribute to the GTP site; these read NKMD and SGL. Lysine 235 carries the N6-acetyllysine modification. Lysine 239 is modified (N6-acetyllysine; alternate). A Glycyl lysine isopeptide (Lys-Gly) (interchain with G-Cter in SUMO1); alternate cross-link involves residue lysine 239. The residue at position 265 (tyrosine 265) is a Phosphotyrosine; by CSK. Position 272 is an N6-acetyllysine; alternate (lysine 272). Lysine 272 bears the N6-succinyllysine; alternate mark. Lysine 275 carries the N6-acetyllysine modification. Lysine 322 participates in a covalent cross-link: Glycyl lysine isopeptide (Lys-Gly) (interchain with G-Cter in SUMO). A Phosphoserine modification is found at serine 325. The residue at position 373 (tyrosine 373) is a Phosphotyrosine; by CSK. Position 435 is a phosphothreonine (threonine 435). Residues lysine 439 and lysine 445 each carry the N6-acetyllysine modification. Serine 502 carries the post-translational modification Phosphoserine. Position 525 is an N6,N6,N6-trimethyllysine; by EEF2KMT (lysine 525). Lysine 529 participates in a covalent cross-link: Glycyl lysine isopeptide (Lys-Gly) (interchain with G-Cter in SUMO). Lysine 572 carries the N6-succinyllysine modification. Serine 595 bears the Phosphoserine; by CDK2 mark. The residue at position 619 (lysine 619) is an N6-acetyllysine. Histidine 715 bears the Diphthamide mark.

It belongs to the TRAFAC class translation factor GTPase superfamily. Classic translation factor GTPase family. EF-G/EF-2 subfamily. Binds to 80S ribosomes. Actively translating ribosomes show mutually exclusive binding of eIF5a (EIF5A or EIF5A2) and EEF2/eEF2. Interacts with SERBP1; interaction sequesters EEF2/eEF2 at the A-site of the ribosome, thereby blocking the interaction sites of the mRNA-tRNA complex, promoting ribosome stabilization and hibernation. Interacts with HABP4; interaction takes place at the A-site of hibernating ribosomes and promotes ribosome stabilization. Component of the mRNA surveillance SURF complex, at least composed of ERF1, ERF3 (ERF3A or ERF3B), EEF2, UPF1/RENT1, SMG1, SMG8 and SMG9. Interacts with RBPMS2. In terms of processing, phosphorylation by EF-2 kinase completely inactivates EF-2; it requires prior phosphorylation by CDK2 at Ser-595 during mitotic prometaphase. Phosphorylation by CSK promotes SUMOylation, proteolytic cleavage, and nuclear translocation if the C-terminal fragment. Diphthamide is 2-[3-carboxyamido-3-(trimethyl-ammonio)propyl]histidine. Post-translationally, ISGylated. In terms of processing, proteolytically processed at two sites following phosphorylation by CSK. SUMOylated following phosphorylation by CSK, promotes proteolytic cleavage.

Its subcellular location is the cytoplasm. The protein localises to the nucleus. It catalyses the reaction GTP + H2O = GDP + phosphate + H(+). In terms of biological role, catalyzes the GTP-dependent ribosomal translocation step during translation elongation. During this step, the ribosome changes from the pre-translocational (PRE) to the post-translocational (POST) state as the newly formed A-site-bound peptidyl-tRNA and P-site-bound deacylated tRNA move to the P and E sites, respectively. Catalyzes the coordinated movement of the two tRNA molecules, the mRNA and conformational changes in the ribosome. This chain is Elongation factor 2 (EEF2), found in Pongo abelii (Sumatran orangutan).